Reading from the N-terminus, the 96-residue chain is Large ribosomal subunit protein bL27 (96 aa).

Positions 1-9 (MLRLDLQFF) are excised as a propeptide.

This sequence belongs to the bacterial ribosomal protein bL27 family. The N-terminus is cleaved by ribosomal processing cysteine protease Prp.

This chain is Large ribosomal subunit protein bL27, found in Geobacillus sp. (strain WCH70).